The primary structure comprises 267 residues: Glutamate racemase (267 aa).

Substrate is bound by residues 10 to 11 (DS) and 42 to 43 (YG). The active-site Proton donor/acceptor is Cys-73. 74–75 (NT) provides a ligand contact to substrate. Catalysis depends on Cys-183, which acts as the Proton donor/acceptor. 184-185 (TH) contacts substrate.

It belongs to the aspartate/glutamate racemases family.

The enzyme catalyses L-glutamate = D-glutamate. It participates in cell wall biogenesis; peptidoglycan biosynthesis. In terms of biological role, provides the (R)-glutamate required for cell wall biosynthesis. This is Glutamate racemase from Limosilactobacillus reuteri (strain DSM 20016) (Lactobacillus reuteri).